The primary structure comprises 217 residues: Translation initiation factor 6 (217 aa).

The protein belongs to the eIF-6 family.

Binds to the 50S ribosomal subunit and prevents its association with the 30S ribosomal subunit to form the 70S initiation complex. In Methanococcoides burtonii (strain DSM 6242 / NBRC 107633 / OCM 468 / ACE-M), this protein is Translation initiation factor 6.